Reading from the N-terminus, the 146-residue chain is 3-hydroxyacyl-[acyl-carrier-protein] dehydratase FabZ (146 aa).

His-48 is an active-site residue.

The protein belongs to the thioester dehydratase family. FabZ subfamily.

It localises to the cytoplasm. The catalysed reaction is a (3R)-hydroxyacyl-[ACP] = a (2E)-enoyl-[ACP] + H2O. Its function is as follows. Involved in unsaturated fatty acids biosynthesis. Catalyzes the dehydration of short chain beta-hydroxyacyl-ACPs and long chain saturated and unsaturated beta-hydroxyacyl-ACPs. In Acetivibrio thermocellus (strain ATCC 27405 / DSM 1237 / JCM 9322 / NBRC 103400 / NCIMB 10682 / NRRL B-4536 / VPI 7372) (Clostridium thermocellum), this protein is 3-hydroxyacyl-[acyl-carrier-protein] dehydratase FabZ.